A 181-amino-acid polypeptide reads, in one-letter code: Protein AC41 (181 aa).

Plays a role in late gene expression. The polypeptide is Protein AC41 (AC41) (Autographa californica nuclear polyhedrosis virus (AcMNPV)).